A 150-amino-acid chain; its full sequence is D-aminoacyl-tRNA deacylase (150 aa).

The short motif at glycine 140–proline 141 is the Gly-cisPro motif, important for rejection of L-amino acids element.

The protein belongs to the DTD family. In terms of assembly, homodimer.

The protein localises to the cytoplasm. The catalysed reaction is glycyl-tRNA(Ala) + H2O = tRNA(Ala) + glycine + H(+). It catalyses the reaction a D-aminoacyl-tRNA + H2O = a tRNA + a D-alpha-amino acid + H(+). In terms of biological role, an aminoacyl-tRNA editing enzyme that deacylates mischarged D-aminoacyl-tRNAs. Also deacylates mischarged glycyl-tRNA(Ala), protecting cells against glycine mischarging by AlaRS. Acts via tRNA-based rather than protein-based catalysis; rejects L-amino acids rather than detecting D-amino acids in the active site. By recycling D-aminoacyl-tRNA to D-amino acids and free tRNA molecules, this enzyme counteracts the toxicity associated with the formation of D-aminoacyl-tRNA entities in vivo and helps enforce protein L-homochirality. This chain is D-aminoacyl-tRNA deacylase (DTD1), found in Kluyveromyces lactis (strain ATCC 8585 / CBS 2359 / DSM 70799 / NBRC 1267 / NRRL Y-1140 / WM37) (Yeast).